We begin with the raw amino-acid sequence, 245 residues long: Ribonuclease PH (245 aa).

Phosphate-binding positions include R87 and 125-127 (GTR).

The protein belongs to the RNase PH family. As to quaternary structure, homohexameric ring arranged as a trimer of dimers.

It carries out the reaction tRNA(n+1) + phosphate = tRNA(n) + a ribonucleoside 5'-diphosphate. Functionally, phosphorolytic 3'-5' exoribonuclease that plays an important role in tRNA 3'-end maturation. Removes nucleotide residues following the 3'-CCA terminus of tRNAs; can also add nucleotides to the ends of RNA molecules by using nucleoside diphosphates as substrates, but this may not be physiologically important. Probably plays a role in initiation of 16S rRNA degradation (leading to ribosome degradation) during starvation. This is Ribonuclease PH from Streptomyces griseus subsp. griseus (strain JCM 4626 / CBS 651.72 / NBRC 13350 / KCC S-0626 / ISP 5235).